The primary structure comprises 209 residues: GTP-binding protein RHB1 (209 aa).

An N-acetylmethionine modification is found at Met-1. The GTP site is built by Gly-28, Lys-29, Thr-30, Thr-31, Val-42, Tyr-45, Thr-48, Asp-132, and Ala-172. Thr-30 lines the Mg(2+) pocket. The short motif at 45–53 (YYPTIENEF) is the Effector region element. Mg(2+) is bound at residue Thr-48. Position 206 is a cysteine methyl ester (Cys-206). Cys-206 carries S-farnesyl cysteine lipidation. Residues 207 to 209 (SIM) constitute a propeptide, removed in mature form.

This sequence belongs to the small GTPase superfamily. Rheb family. As to quaternary structure, interacts with BTN2.

The protein localises to the cell membrane. It carries out the reaction GTP + H2O = GDP + phosphate + H(+). In terms of biological role, binds GTP and exhibits intrinsic GTPase activity. Involved in the regulation of arginine and lysine uptake. Acts through the CAN1 permease. The polypeptide is GTP-binding protein RHB1 (RHB1) (Saccharomyces cerevisiae (strain ATCC 204508 / S288c) (Baker's yeast)).